Reading from the N-terminus, the 308-residue chain is Glutathione synthetase (308 aa).

Positions 120–304 (KLGALRFNNL…LADQVIARLL (185 aa)) constitute an ATP-grasp domain. 146-202 (AREQEEVVLKPLGGRAGQGLVRVAGAAPGLEALLELVTDQEQLPVMVQRFLPAVIEG) is an ATP binding site. Mg(2+)-binding residues include Glu-275 and Asn-277.

This sequence belongs to the prokaryotic GSH synthase family. Requires Mg(2+) as cofactor. Mn(2+) is required as a cofactor.

It catalyses the reaction gamma-L-glutamyl-L-cysteine + glycine + ATP = glutathione + ADP + phosphate + H(+). It functions in the pathway sulfur metabolism; glutathione biosynthesis; glutathione from L-cysteine and L-glutamate: step 2/2. The sequence is that of Glutathione synthetase from Prochlorococcus marinus (strain MIT 9313).